Reading from the N-terminus, the 300-residue chain is Fatty acid elongase 3 (300 aa).

The next 3 membrane-spanning stretches (helical) occupy residues 31–51, 61–81, and 127–147; these read VPAVAVVLYLILVLYVPENVM, FLNMLWNLLLTVFSICGAYYC, and IFFDGFVGLWVAAFVLSKIPE. A HxxHH motif motif is present at residues 165–169; sequence HWYHH. The active-site Nucleophile is the His168. 4 helical membrane-spanning segments follow: residues 170–190, 192–212, 219–239, and 261–283; these read ATVMLFCWHAYAYTISSGLWF, TMNYCVHSIMYFYYFMCACGM, IAPLITMMQILQMVAGTLIVL, and MGLLMYVSYLFLFSQLYYRSYIS.

It belongs to the ELO family.

Its subcellular location is the endoplasmic reticulum membrane. The catalysed reaction is an acyl-CoA + malonyl-CoA + H(+) = a 3-oxoacyl-CoA + CO2 + CoA. It participates in lipid metabolism; fatty acid biosynthesis. In terms of biological role, involved in the synthesis of fatty acids. Elongates C14 fatty acids to C18. Required for the maintenance of the global lipidome profile in this parasite. In Trypanosoma cruzi (strain CL Brener), this protein is Fatty acid elongase 3.